An 83-amino-acid polypeptide reads, in one-letter code: Small ribosomal subunit protein eS21 (83 aa).

The protein belongs to the eukaryotic ribosomal protein eS21 family. Component of the 40S small ribosomal subunit. Interacts with sta.

Its subcellular location is the cytoplasm. The protein resides in the cytosol. The protein localises to the rough endoplasmic reticulum. This Ceratitis capitata (Mediterranean fruit fly) protein is Small ribosomal subunit protein eS21 (RpS21).